Here is a 234-residue protein sequence, read N- to C-terminus: Glutathione S-transferase U16 (234 aa).

One can recognise a GST N-terminal domain in the interval 5 to 85 (EEVKLLGVWY…YIDETWNSSA (81 aa)). Glutathione is bound by residues 15-16 (SP), 42-43 (SK), 56-57 (KV), and 69-70 (ES). Residues 92–219 (HPYDRALARF…APEIEKVAEF (128 aa)) form the GST C-terminal domain.

This sequence belongs to the GST superfamily. Tau family.

The protein localises to the cytoplasm. The protein resides in the cytosol. It carries out the reaction RX + glutathione = an S-substituted glutathione + a halide anion + H(+). In terms of biological role, may be involved in the conjugation of reduced glutathione to a wide number of exogenous and endogenous hydrophobic electrophiles and have a detoxification role against certain herbicides. The polypeptide is Glutathione S-transferase U16 (GSTU16) (Arabidopsis thaliana (Mouse-ear cress)).